Here is a 183-residue protein sequence, read N- to C-terminus: MRLLASVLLALFAVSHAEEGARLLASKSLLNRYAVEGRDLTLQYNIYNVGSSAALDVELSDDSFPPEDFGIVSGMLNVKWDRIAPASNVSHTVVLRPLKAGYFNFTSATVTYLAQEDGPVVIGFTSAPGQGGILAQREFDRRFSPHFLDWAAFGVMTLPSIGIPLLLWYSSKRKYDTPKSKKN.

An N-terminal signal peptide occupies residues 1–17 (MRLLASVLLALFAVSHA). Topologically, residues 18-149 (EEGARLLASK…DRRFSPHFLD (132 aa)) are lumenal. 2 N-linked (GlcNAc...) asparagine glycosylation sites follow: N88 and N104. The chain crosses the membrane as a helical span at residues 150 to 169 (WAAFGVMTLPSIGIPLLLWY). The Cytoplasmic portion of the chain corresponds to 170 to 183 (SSKRKYDTPKSKKN).

Belongs to the TRAP-beta family. Heterotetramer of TRAP-alpha, TRAP-beta, TRAP-delta and TRAP-gamma. Interacts with STING1.

The protein localises to the endoplasmic reticulum membrane. In terms of biological role, TRAP proteins are part of a complex whose function is to bind calcium to the ER membrane and thereby regulate the retention of ER resident proteins. The sequence is that of Translocon-associated protein subunit beta (SSR2) from Canis lupus familiaris (Dog).